The primary structure comprises 368 residues: Methionine import ATP-binding protein MetN (368 aa).

Residues Ile-5–Ile-260 enclose the ABC transporter domain. Residue Gly-41–Ser-48 participates in ATP binding.

This sequence belongs to the ABC transporter superfamily. Methionine importer (TC 3.A.1.24) family. In terms of assembly, the complex is composed of two ATP-binding proteins (MetN), two transmembrane proteins (MetI) and a solute-binding protein (MetQ).

Its subcellular location is the cell membrane. The enzyme catalyses L-methionine(out) + ATP + H2O = L-methionine(in) + ADP + phosphate + H(+). It carries out the reaction D-methionine(out) + ATP + H2O = D-methionine(in) + ADP + phosphate + H(+). Its function is as follows. Part of the ABC transporter complex MetNIQ involved in methionine import. Responsible for energy coupling to the transport system. This is Methionine import ATP-binding protein MetN from Lactococcus lactis subsp. cremoris (strain MG1363).